The primary structure comprises 1167 residues: Rhoptry neck protein 2-like protein 2 (1167 aa).

A signal peptide spans 1–20 (MSSNLAFLSLSLAESTASLG). Over 21-977 (KSLEETRTRL…WVAKRSRSRK (957 aa)) the chain is Cytoplasmic. The segment at 55–94 (GPGLSVEGKQTEQMSRKSAEDTRASSLSSDPDDGRAAQLA) is disordered. The span at 68–77 (MSRKSAEDTR) shows a compositional bias: basic and acidic residues. Residues 978-998 (LAIVSVLSLGLIFAYTLLSAL) traverse the membrane as a helical segment. Residues 999-1167 (DIAQFLTDSG…TPQRAQDGSR (169 aa)) lie on the Extracellular side of the membrane. A disulfide bridge links Cys-1015 with Cys-1026.

It belongs to the apicomplexan parasites RON2 family.

It is found in the secreted. Its subcellular location is the host cell membrane. May play a role in host cell invasion. The polypeptide is Rhoptry neck protein 2-like protein 2 (RON2L2) (Toxoplasma gondii (strain ATCC 50611 / Me49)).